The sequence spans 127 residues: Small ribosomal subunit protein bS6 (127 aa).

The disordered stretch occupies residues Gln-104–Ala-127. Basic and acidic residues predominate over residues Glu-107 to Ala-119.

This sequence belongs to the bacterial ribosomal protein bS6 family.

Binds together with bS18 to 16S ribosomal RNA. The polypeptide is Small ribosomal subunit protein bS6 (Coxiella burnetii (strain CbuG_Q212) (Coxiella burnetii (strain Q212))).